Here is a 340-residue protein sequence, read N- to C-terminus: MTLVGNFSPLVLVGDSDRVEAETVGAYLDGWAGHDKVRLATANAIKAILSGAGRLVGRIARGYLPGDPGKLVGVNSDQDQQKSIDVGSHNLFVELLIAAGVASILSEEADLPVAGKADGLVAVAIDPLDGSGNVGLGAPLGTIFSIFPADVEEPFLQPGNRQIAAGYVSYGNSVDLGFSVGEGVIFATLDPVSGQFHITRRNVKLPERTSDLAFNASVQRHLSAGMQAYVNDAFLGKDGPRGRNFNMRWLGAAVGDMHRIMQRGGLFFYVNDSRPGYEKGRLRLVYEANPIAFLAREAGGKATDGSRPILDIVPQTYHERSALVFGVAEEVDILGEYFVK.

E107, D126, L128, and D129 together coordinate Mg(2+). Substrate is bound at residue N215. E287 serves as a coordination point for Mg(2+).

This sequence belongs to the FBPase class 1 family. In terms of assembly, homotetramer. The cofactor is Mg(2+).

Its subcellular location is the cytoplasm. The enzyme catalyses beta-D-fructose 1,6-bisphosphate + H2O = beta-D-fructose 6-phosphate + phosphate. It functions in the pathway carbohydrate biosynthesis; gluconeogenesis. In Brucella suis (strain ATCC 23445 / NCTC 10510), this protein is Fructose-1,6-bisphosphatase class 1.